A 465-amino-acid polypeptide reads, in one-letter code: UDP-N-acetylmuramate--L-alanine ligase (465 aa).

112–118 contacts ATP; the sequence is GTHGKTT.

It belongs to the MurCDEF family.

The protein localises to the cytoplasm. The enzyme catalyses UDP-N-acetyl-alpha-D-muramate + L-alanine + ATP = UDP-N-acetyl-alpha-D-muramoyl-L-alanine + ADP + phosphate + H(+). The protein operates within cell wall biogenesis; peptidoglycan biosynthesis. Its function is as follows. Cell wall formation. This is UDP-N-acetylmuramate--L-alanine ligase from Burkholderia pseudomallei (strain 1106a).